The sequence spans 185 residues: dTTP/UTP pyrophosphatase (185 aa).

Asp-64 functions as the Proton acceptor in the catalytic mechanism.

The protein belongs to the Maf family. YhdE subfamily. It depends on a divalent metal cation as a cofactor.

It localises to the cytoplasm. The catalysed reaction is dTTP + H2O = dTMP + diphosphate + H(+). The enzyme catalyses UTP + H2O = UMP + diphosphate + H(+). In terms of biological role, nucleoside triphosphate pyrophosphatase that hydrolyzes dTTP and UTP. May have a dual role in cell division arrest and in preventing the incorporation of modified nucleotides into cellular nucleic acids. In Leptospira borgpetersenii serovar Hardjo-bovis (strain JB197), this protein is dTTP/UTP pyrophosphatase.